The chain runs to 338 residues: MEKQTVAVLGPGSWGTALSQVLNDNGHEVRIWGNLPEQINEINTYHTNKHYFKDVVLDENIIAYTDLAETLKDVDAILFVVPTKVTRLVAQQVAQTLDHKAIIMHASKGLEPDSHKRLSTILEEEIPEQLRSDIVVVSGPSHAEETIVRDLTLITAASKDLQTAQYVQELFSNHYFRLYTNTDVIGVETAGALKNIIAVGAGALHGLGFGDNAKAAIIARGLAEITRLGVALGASPLTYSGLSGVGDLIVTGTSIHSRNWRAGDALGRGESLADIEANMGMVIEGISTTRAAYELAQELGVYMPITQAIYQVIYHGTNIKDAIYDIMNNEFKAENEWS.

NADPH contacts are provided by Ser13, Trp14, and Lys108. Lys108, Gly139, and Ser141 together coordinate sn-glycerol 3-phosphate. Ala143 contacts NADPH. Sn-glycerol 3-phosphate-binding residues include Lys194, Asp247, Ser257, Arg258, and Asn259. Lys194 serves as the catalytic Proton acceptor. NADPH is bound at residue Arg258. The NADPH site is built by Val282 and Glu284.

This sequence belongs to the NAD-dependent glycerol-3-phosphate dehydrogenase family.

The protein resides in the cytoplasm. It carries out the reaction sn-glycerol 3-phosphate + NAD(+) = dihydroxyacetone phosphate + NADH + H(+). It catalyses the reaction sn-glycerol 3-phosphate + NADP(+) = dihydroxyacetone phosphate + NADPH + H(+). It participates in membrane lipid metabolism; glycerophospholipid metabolism. Its function is as follows. Catalyzes the reduction of the glycolytic intermediate dihydroxyacetone phosphate (DHAP) to sn-glycerol 3-phosphate (G3P), the key precursor for phospholipid synthesis. This is Glycerol-3-phosphate dehydrogenase [NAD(P)+] from Streptococcus pneumoniae (strain P1031).